A 126-amino-acid chain; its full sequence is MADEIAKAQVARPGGDTIFGKIIRKEIPAKIIFEDDRCLAFHDISPQAPTHFLVIPKKHISQISVAEDDDESLLGHLMIVGKKCAADLGLNKGYRMVVNEGSDGGQSVYHVHLHVLGGRQMHWPPG.

Alanine 2 is modified (N-acetylalanine). In terms of domain architecture, HIT spans 18–126 (IFGKIIRKEI…GGRQMHWPPG (109 aa)). N6-acetyllysine is present on residues lysine 21 and lysine 30. 43–44 (DI) contributes to the AMP binding site. Serine 45 and serine 72 each carry phosphoserine. AMP contacts are provided by residues asparagine 99, 105–107 (GQS), and 112–114 (HLH). The Histidine triad motif motif lies at 110–114 (HVHLH). Catalysis depends on histidine 112, which acts as the Tele-AMP-histidine intermediate.

Belongs to the HINT family. In terms of assembly, homodimer. Interacts with CDK7. Interacts with RUVBL1 and RUVBL2 and is associated with the LEF1/TCF1-CTNNB1 complex and with a KAT5 histone acetyltransferase complex. Identified in a complex with MITF and CTNNB1. Interacts with CDC34 and RBX1, and is part of a SCF (SKP2-CUL1-F-box protein) E3 ubiquitin-protein ligase complex. Interacts with SUMO1, SUMO2 and RGS17. Interacts with the Ten-1 ICD form of TENM1. Interacts with CALM1; interaction increases in the presence of calcium ions. As to expression, widely expressed.

It localises to the cytoplasm. The protein localises to the nucleus. The enzyme catalyses adenosine 5'-phosphoramidate + H2O = AMP + NH4(+). Functionally, exhibits adenosine 5'-monophosphoramidase activity, hydrolyzing purine nucleotide phosphoramidates with a single phosphate group such as adenosine 5'monophosphoramidate (AMP-NH2) to yield AMP and NH2. Hydrolyzes adenosine 5'monophosphomorpholidate (AMP-morpholidate) and guanosine 5'monophosphomorpholidate (GMP-morpholidate). Hydrolyzes lysyl-AMP (AMP-N-epsilon-(N-alpha-acetyl lysine methyl ester)) generated by lysine tRNA ligase, as well as Met-AMP, His-AMP and Asp-AMP, lysyl-GMP (GMP-N-epsilon-(N-alpha-acetyl lysine methyl ester)) and AMP-N-alanine methyl ester. Hydrolyzes 3-indolepropionic acyl-adenylate, tryptamine adenosine phosphoramidate monoester and other fluorogenic purine nucleoside tryptamine phosphoramidates in vitro. Can also convert adenosine 5'-O-phosphorothioate and guanosine 5'-O-phosphorothioate to the corresponding nucleoside 5'-O-phosphates with concomitant release of hydrogen sulfide. In addition, functions as scaffolding protein that modulates transcriptional activation by the LEF1/TCF1-CTNNB1 complex and by the complex formed with MITF and CTNNB1. Modulates p53/TP53 levels and p53/TP53-mediated apoptosis. Modulates proteasomal degradation of target proteins by the SCF (SKP2-CUL1-F-box protein) E3 ubiquitin-protein ligase complex. Also exhibits SUMO-specific isopeptidase activity, deconjugating SUMO1 from RGS17. Deconjugates SUMO1 from RANGAP1. The protein is Adenosine 5'-monophosphoramidase HINT1 (HINT1) of Homo sapiens (Human).